Consider the following 462-residue polypeptide: Nuclear factor interleukin-3-regulated protein (462 aa).

The segment at 1–22 (MQLRKMQTIKKEPAPLDPTSSS) is disordered. A Glycyl lysine isopeptide (Lys-Gly) (interchain with G-Cter in SUMO2) cross-link involves residue Lys-24. The bZIP domain maps to 73 to 136 (DAMYWEKRRK…GLISSTAYAQ (64 aa)). Residues 79–95 (KRRKNNEAAKRSREKRR) form a basic motif region. Positions 99 to 106 (LVLENKLI) are leucine-zipper. The disordered stretch occupies residues 188–214 (SDVSEVSSVEHTQESPAQGGCRSPENK). Lys-214 participates in a covalent cross-link: Glycyl lysine isopeptide (Lys-Gly) (interchain with G-Cter in SUMO2). Residue Lys-219 forms a Glycyl lysine isopeptide (Lys-Gly) (interchain with G-Cter in SUMO1); alternate linkage. Lys-219 is covalently cross-linked (Glycyl lysine isopeptide (Lys-Gly) (interchain with G-Cter in SUMO2); alternate). The tract at residues 259–298 (PPLLQVHGSTSNSPRTSEADEGVVGKSSDGEDEQQVPKGP) is disordered. The segment covering 265 to 274 (HGSTSNSPRT) has biased composition (polar residues). The interval 281 to 420 (VVGKSSDGED…FKTGVVEVKD (140 aa)) is necessary for transcriptional repression and sufficient for interaction with PER2. The residue at position 301 (Ser-301) is a Phosphoserine. Residues Lys-314, Lys-326, Lys-332, Lys-337, and Lys-350 each participate in a glycyl lysine isopeptide (Lys-Gly) (interchain with G-Cter in SUMO2) cross-link. A Phosphoserine modification is found at Ser-353. Residues Lys-360, Lys-394, Lys-401, Lys-406, Lys-412, Lys-419, Lys-424, Lys-434, and Lys-448 each participate in a glycyl lysine isopeptide (Lys-Gly) (interchain with G-Cter in SUMO2) cross-link.

It belongs to the bZIP family. NFIL3 subfamily. Homodimer. Binds DNA as a dimer. Interacts with DR1. Interacts with PER2 and CRY2. Interacts with NR0B2. Interacts with NR1D1. Interacts with MYSM1. Expressed in suprachiasmatic nucleus and liver (at protein level). Expressed in suprachiasmatic nucleus, hippocampus, gyrus dentatus, piriform cortex, internal granular layer of olfactory bulb, dorsomedial hypothalamic nucleus, pontine nuclei, granular layer of cerebellum, liver and calvariae osteoblasts. Expressed in natural killer cell precursors in bone marrow.

Its subcellular location is the nucleus. Acts as a transcriptional regulator that recognizes and binds to the sequence 5'-[GA]TTA[CT]GTAA[CT]-3', a sequence present in many cellular and viral promoters. Represses transcription from promoters with activating transcription factor (ATF) sites. Represses promoter activity in osteoblasts. Represses transcriptional activity of PER1. Represses transcriptional activity of PER2 via the B-site on the promoter. Activates transcription from the interleukin-3 promoter in T-cells. Competes for the same consensus-binding site with PAR DNA-binding factors (DBP, HLF and TEF). Component of the circadian clock that acts as a negative regulator for the circadian expression of PER2 oscillation in the cell-autonomous core clock. Protects pro-B cells from programmed cell death. Represses the transcription of CYP2A5. Positively regulates the expression and activity of CES2 by antagonizing the repressive action of NR1D1 on CES2. Required for the development of natural killer cell precursors. This chain is Nuclear factor interleukin-3-regulated protein (Nfil3), found in Mus musculus (Mouse).